Here is a 1012-residue protein sequence, read N- to C-terminus: Structural polyprotein (1012 aa).

Asp30 lines the a divalent metal cation pocket. The region spanning 513–755 is the Peptidase S50 domain; sequence ADKGYEVVAN…AGRQYHLAMA (243 aa). Ser652 functions as the Nucleophile in the catalytic mechanism. Lys692 is a catalytic residue. The tract at residues 970–1012 is disordered; it reads MEMKHRNPRRALPKPKPKPNAPTQRPPGRLGRWIRTVSDEDLE. Residues 975–986 are compositionally biased toward basic residues; sequence RNPRRALPKPKP. The interaction with VP1 protein stretch occupies residues 1003–1012; sequence IRTVSDEDLE.

Homotrimer. A central divalent metal stabilizes the VP2 trimer. Interacts with host ITGA4/ITGB1. As to quaternary structure, homodimer. Interacts (via C-terminus) with VP1 in the cytoplasm. Interacts with VP2. Post-translationally, specific enzymatic cleavages yield mature proteins. The capsid assembly seems to be regulated by polyprotein processing. The protease VP4 cleaves itself off the polyprotein, thus releasing pre-VP2 and VP3 within the infected cell. During capsid assembly, the C-terminus of pre-VP2 is further processed by VP4, giving rise to VP2, the external capsid protein and three small peptides that all stay closely associated with the capsid.

The protein resides in the virion. It localises to the host cytoplasm. Its function is as follows. Capsid protein VP2 self assembles to form an icosahedral capsid with a T=13 symmetry, about 70 nm in diameter, and consisting of 260 VP2 trimers. The capsid encapsulates the genomic dsRNA. VP2 is also involved in attachment and entry into the host cell by interacting with host ITGA4/ITGB1. Functionally, the precursor of VP2 plays an important role in capsid assembly. First, pre-VP2 and VP2 oligomers assemble to form a procapsid. Then, the pre-VP2 intermediates may be processed into VP2 proteins by proteolytic cleavage mediated by VP4 to obtain the mature virion. The final capsid is composed of pentamers and hexamers but VP2 has a natural tendency to assemble into all-pentameric structures. Therefore pre-VP2 may be required to allow formation of the hexameric structures. Protease VP4 is a serine protease that cleaves the polyprotein into its final products. Pre-VP2 is first partially cleaved, and may be completely processed by VP4 upon capsid maturation. In terms of biological role, capsid protein VP3 plays a key role in virion assembly by providing a scaffold for the capsid made of VP2. May self-assemble to form a T=4-like icosahedral inner-capsid composed of at least 180 trimers. Plays a role in genomic RNA packaging by recruiting VP1 into the capsid and interacting with the dsRNA genome segments to form a ribonucleoprotein complex. Additionally, the interaction of the VP3 C-terminal tail with VP1 removes the inherent structural blockade of the polymerase active site. Thus, VP3 can also function as a transcriptional activator. Its function is as follows. Structural peptide 1 is a small peptide derived from pre-VP2 C-terminus. It destabilizes and perforates cell membranes, suggesting a role during entry. Functionally, structural peptide 2 is a small peptide derived from pVP2 C-terminus. It is not essential for the virus viability, but viral growth is affected when missing. Structural peptide 3 is a small peptide derived from pVP2 C-terminus. It is not essential for the virus viability, but viral growth is affected when missing. In terms of biological role, structural peptide 4 is a small peptide derived from pVP2 C-terminus. It is essential for the virus viability. In Avian infectious bursal disease virus (strain Chicken/Cuba/Soroa/1998) (IBDV), this protein is Structural polyprotein.